The chain runs to 670 residues: Lebercilin-like protein (670 aa).

A disordered region spans residues 30–51; it reads KRSPGTGDFSRNSNASNKSVDY. Residues 38–51 are compositionally biased toward polar residues; it reads FSRNSNASNKSVDY. Coiled coils occupy residues 148 to 259 and 305 to 336; these read LHKI…EREE and AAQT…IKNI. Positions 374 to 393 are disordered; that stretch reads HQGTQKSDVPPLTTKGKKAT. The stretch at 420–440 forms a coiled coil; sequence EDSKRKYEDLSGEEKHLEVQI. Disordered stretches follow at residues 495 to 516, 557 to 580, and 609 to 670; these read RSMQ…YTKG, KHLS…SFGK, and LKTD…KIII. 2 stretches are compositionally biased toward basic and acidic residues: residues 560 to 572 and 621 to 632; these read SNRE…HSDS and GSEEPLQSKESH. The span at 651-662 shows a compositional bias: polar residues; the sequence is TVVNSIKPSSPT.

The protein belongs to the LCA5 family.

This chain is Lebercilin-like protein (LCA5L), found in Homo sapiens (Human).